We begin with the raw amino-acid sequence, 704 residues long: Elongation factor G (704 aa).

The region spanning 8 to 291 (DKVRNIGIMA…AVVDYLASPL (284 aa)) is the tr-type G domain. Residues 17 to 24 (AHIDAGKT), 90 to 94 (DTPGH), and 144 to 147 (NKMD) each bind GTP.

Belongs to the TRAFAC class translation factor GTPase superfamily. Classic translation factor GTPase family. EF-G/EF-2 subfamily.

It is found in the cytoplasm. Functionally, catalyzes the GTP-dependent ribosomal translocation step during translation elongation. During this step, the ribosome changes from the pre-translocational (PRE) to the post-translocational (POST) state as the newly formed A-site-bound peptidyl-tRNA and P-site-bound deacylated tRNA move to the P and E sites, respectively. Catalyzes the coordinated movement of the two tRNA molecules, the mRNA and conformational changes in the ribosome. The sequence is that of Elongation factor G from Chlorobium phaeovibrioides (strain DSM 265 / 1930) (Prosthecochloris vibrioformis (strain DSM 265)).